The sequence spans 325 residues: tRNA U34 carboxymethyltransferase (325 aa).

Residues Lys-93, Trp-107, Lys-112, Gly-132, Met-198, Tyr-202, and Arg-317 each coordinate carboxy-S-adenosyl-L-methionine.

It belongs to the class I-like SAM-binding methyltransferase superfamily. CmoB family. In terms of assembly, homotetramer.

The catalysed reaction is carboxy-S-adenosyl-L-methionine + 5-hydroxyuridine(34) in tRNA = 5-carboxymethoxyuridine(34) in tRNA + S-adenosyl-L-homocysteine + H(+). In terms of biological role, catalyzes carboxymethyl transfer from carboxy-S-adenosyl-L-methionine (Cx-SAM) to 5-hydroxyuridine (ho5U) to form 5-carboxymethoxyuridine (cmo5U) at position 34 in tRNAs. This is tRNA U34 carboxymethyltransferase from Desulforapulum autotrophicum (strain ATCC 43914 / DSM 3382 / VKM B-1955 / HRM2) (Desulfobacterium autotrophicum).